The primary structure comprises 591 residues: uncharacterized protein (591 aa).

The N-terminal stretch at 1 to 30 is a signal peptide; the sequence is MGKLLFGKLVFKKSLFLLSGMSSLAVFLTA. A lipid anchor (N-palmitoyl cysteine) is attached at Cys-31. A lipid anchor (S-diacylglycerol cysteine) is attached at Cys-31. Over residues 476 to 488 the composition is skewed to basic and acidic residues; the sequence is KKKLSEVATKKNE. 2 disordered regions span residues 476–497 and 510–535; these read KKKL…NGSN and SSSS…DNDG. Positions 510–523 are enriched in low complexity; it reads SSSSTSMRNGSSDS.

To T.pallidum TmpC.

It is found in the cell membrane. This is an uncharacterized protein from Mycoplasma genitalium (strain ATCC 33530 / DSM 19775 / NCTC 10195 / G37) (Mycoplasmoides genitalium).